Reading from the N-terminus, the 228-residue chain is Lipoprotein-releasing system ATP-binding protein LolD (228 aa).

One can recognise an ABC transporter domain in the interval 8 to 228; it reads LQAKKLVKAY…ELHDGLLRRL (221 aa). Residue 44 to 51 participates in ATP binding; the sequence is GASGSGKS.

This sequence belongs to the ABC transporter superfamily. Lipoprotein translocase (TC 3.A.1.125) family. In terms of assembly, the complex is composed of two ATP-binding proteins (LolD) and two transmembrane proteins (LolC and LolE).

The protein localises to the cell inner membrane. Its function is as follows. Part of the ABC transporter complex LolCDE involved in the translocation of mature outer membrane-directed lipoproteins, from the inner membrane to the periplasmic chaperone, LolA. Responsible for the formation of the LolA-lipoprotein complex in an ATP-dependent manner. This Alcanivorax borkumensis (strain ATCC 700651 / DSM 11573 / NCIMB 13689 / SK2) protein is Lipoprotein-releasing system ATP-binding protein LolD.